We begin with the raw amino-acid sequence, 312 residues long: Small ribosomal subunit protein RACK1 (312 aa).

7 WD repeats span residues 9–42 (GHRG…ISWK), 63–93 (GHTG…RMWD), 105–135 (KHTK…RVWN), 148–180 (GHED…KVWN), 192–222 (GHSN…LLWD), 233–262 (NVES…SVYD), and 279–307 (PSEC…RVWS).

This sequence belongs to the WD repeat G protein beta family. Ribosomal protein RACK1 subfamily.

In Leishmania chagasi, this protein is Small ribosomal subunit protein RACK1.